The following is a 967-amino-acid chain: Vacuolar membrane protease (967 aa).

The Cytoplasmic segment spans residues 1-16 (MARPSLSRSNPLGFTP). The chain crosses the membrane as a helical span at residues 17–37 (WPVTVITAVVYLALVVPLLVV). At 38–387 (HHVVPSAPSS…SAFVVFELHT (350 aa)) the chain is on the vacuolar side. N-linked (GlcNAc...) asparagine glycans are attached at residues N53 and N119. Zn(2+)-binding residues include H171 and D183. Catalysis depends on E217, which acts as the Proton acceptor. Residues E218, E243, and H316 each coordinate Zn(2+). Residues 388-408 (LFALSVTLLVVAPLVLLVTSI) traverse the membrane as a helical segment. The Cytoplasmic portion of the chain corresponds to 409-441 (ALNRADKMYLFRASASPEDSDGSEAVLLHGVRG). The helical transmembrane segment at 442 to 462 (FFRFPFLLVIPTAVTVGLAYL) threads the bilayer. Residues 463-472 (VTKFNPYIIH) lie on the Vacuolar side of the membrane. Residues 473–493 (SSEYAVWSMMISAWVFLAWFV) traverse the membrane as a helical segment. Residues 494–507 (SRVADFARPSAFHR) lie on the Cytoplasmic side of the membrane. The helical transmembrane segment at 508–528 (VYTLTWLFLVEWVLLVISTVY) threads the bilayer. The Vacuolar portion of the chain corresponds to 529–532 (ENKY). The helical transmembrane segment at 533 to 553 (GLAGGYFVFFAFAGTFLATWI) threads the bilayer. Residues 554 to 663 (SYLELFALPR…WSIHLPKWVW (110 aa)) lie on the Cytoplasmic side of the membrane. The interval 579 to 612 (SSHGSRLGTASGEDVEDGEDEDEDDDGTTAEATE) is disordered. Positions 591–606 (EDVEDGEDEDEDDDGT) are enriched in acidic residues. A helical transmembrane segment spans residues 664–684 (VLQFLLTAPLVLTFVGPLALL). The Vacuolar segment spans residues 685 to 700 (LTSALRQTGQDGSSSL). A helical membrane pass occupies residues 701 to 721 (FIYIAVAALTTLLFIPLLPFI). Over 722–727 (HRYTHH) the chain is Cytoplasmic. A helical transmembrane segment spans residues 728-748 (IPLFLLCVFAGTLIYNLVAFP). Residues 749–967 (FSPANRLKLF…LVEGSRRFEI (219 aa)) are Vacuolar-facing. 2 N-linked (GlcNAc...) asparagine glycosylation sites follow: N795 and N832.

It belongs to the peptidase M28 family. Zn(2+) serves as cofactor.

The protein resides in the vacuole membrane. Its function is as follows. May be involved in vacuolar sorting and osmoregulation. The polypeptide is Vacuolar membrane protease (Neosartorya fischeri (strain ATCC 1020 / DSM 3700 / CBS 544.65 / FGSC A1164 / JCM 1740 / NRRL 181 / WB 181) (Aspergillus fischerianus)).